The following is a 99-amino-acid chain: Small ribosomal subunit protein uS19c (99 aa).

This sequence belongs to the universal ribosomal protein uS19 family.

The protein resides in the plastid. Its subcellular location is the chloroplast. Functionally, protein S19 forms a complex with S13 that binds strongly to the 16S ribosomal RNA. The polypeptide is Small ribosomal subunit protein uS19c (Oenothera biennis (German evening primrose)).